The chain runs to 155 residues: MSRRGTAEKKTAKSDPIYRNRLVNMLVNRILKHGKKSLAYQIIYRAMKKIQQKTETNPLSVLRQAIRGVTPDIAVKARRVGGSTHQVPIEIGSTQGKALAIRWLLGASRKRPGRNMAFKLSSELVDAAKGSGDAIRKKEETHRMAEANRAFAHFR.

Belongs to the universal ribosomal protein uS7 family. In terms of assembly, part of the 30S ribosomal subunit.

The protein resides in the plastid. The protein localises to the chloroplast. Functionally, one of the primary rRNA binding proteins, it binds directly to 16S rRNA where it nucleates assembly of the head domain of the 30S subunit. In Lotus japonicus (Lotus corniculatus var. japonicus), this protein is Small ribosomal subunit protein uS7cz/uS7cy (rps7-A).